Here is a 130-residue protein sequence, read N- to C-terminus: Small ribosomal subunit protein uS9 (130 aa).

The protein belongs to the universal ribosomal protein uS9 family.

This chain is Small ribosomal subunit protein uS9, found in Geotalea daltonii (strain DSM 22248 / JCM 15807 / FRC-32) (Geobacter daltonii).